The following is a 116-amino-acid chain: uncharacterized protein (116 aa).

It belongs to the mimivirus L15/L51/R83 family.

This is an uncharacterized protein from Acanthamoeba polyphaga mimivirus (APMV).